A 357-amino-acid chain; its full sequence is tRNA N6-adenosine threonylcarbamoyltransferase (357 aa).

Histidine 115 and histidine 119 together coordinate Fe cation. Residues 137–141, aspartate 170, glycine 183, and asparagine 281 each bind substrate; that span reads LASGG. Aspartate 309 provides a ligand contact to Fe cation.

This sequence belongs to the KAE1 / TsaD family. Requires Fe(2+) as cofactor.

The protein localises to the cytoplasm. The enzyme catalyses L-threonylcarbamoyladenylate + adenosine(37) in tRNA = N(6)-L-threonylcarbamoyladenosine(37) in tRNA + AMP + H(+). Functionally, required for the formation of a threonylcarbamoyl group on adenosine at position 37 (t(6)A37) in tRNAs that read codons beginning with adenine. Is involved in the transfer of the threonylcarbamoyl moiety of threonylcarbamoyl-AMP (TC-AMP) to the N6 group of A37, together with TsaE and TsaB. TsaD likely plays a direct catalytic role in this reaction. The protein is tRNA N6-adenosine threonylcarbamoyltransferase of Nitrobacter winogradskyi (strain ATCC 25391 / DSM 10237 / CIP 104748 / NCIMB 11846 / Nb-255).